The following is a 218-amino-acid chain: Deoxyribose-phosphate aldolase (218 aa).

Residue Asp92 is the Proton donor/acceptor of the active site. Residue Lys155 is the Schiff-base intermediate with acetaldehyde of the active site. Lys184 acts as the Proton donor/acceptor in catalysis.

The protein belongs to the DeoC/FbaB aldolase family. DeoC type 1 subfamily.

The protein resides in the cytoplasm. The catalysed reaction is 2-deoxy-D-ribose 5-phosphate = D-glyceraldehyde 3-phosphate + acetaldehyde. It functions in the pathway carbohydrate degradation; 2-deoxy-D-ribose 1-phosphate degradation; D-glyceraldehyde 3-phosphate and acetaldehyde from 2-deoxy-alpha-D-ribose 1-phosphate: step 2/2. In terms of biological role, catalyzes a reversible aldol reaction between acetaldehyde and D-glyceraldehyde 3-phosphate to generate 2-deoxy-D-ribose 5-phosphate. In Clostridium kluyveri (strain NBRC 12016), this protein is Deoxyribose-phosphate aldolase.